We begin with the raw amino-acid sequence, 701 residues long: Polyribonucleotide nucleotidyltransferase (701 aa).

The Mg(2+) site is built by aspartate 487 and aspartate 493. The region spanning 554 to 613 is the KH domain; the sequence is PTMIAMKIDTDKIRDVIGKGGATIRAICEETKASIDIEDDGSIKIFGETKEAADAAKQRI. The region spanning 623–691 is the S1 motif domain; that stretch reads GKIYVGKVER…NRGRIKLSIK (69 aa).

The protein belongs to the polyribonucleotide nucleotidyltransferase family. In terms of assembly, component of the RNA degradosome, which is a multiprotein complex involved in RNA processing and mRNA degradation. Requires Mg(2+) as cofactor.

It localises to the cytoplasm. The enzyme catalyses RNA(n+1) + phosphate = RNA(n) + a ribonucleoside 5'-diphosphate. Functionally, involved in mRNA degradation. Catalyzes the phosphorolysis of single-stranded polyribonucleotides processively in the 3'- to 5'-direction. The sequence is that of Polyribonucleotide nucleotidyltransferase from Pseudomonas entomophila (strain L48).